Here is a 1030-residue protein sequence, read N- to C-terminus: Tricorn protease (1030 aa).

Positions 1-270 (MANLLQNPDI…DNVKSLDIGP (270 aa)) are six-bladed beta propeller. Residues 93 to 94 (RR) are binds the substrate's C-terminus. The tract at residues 286–635 (LEDFSMSPGD…EEEKSLNIDA (350 aa)) is seven-bladed beta propeller. Residues 641–712 (NVKEDFAEMY…RTSHSYEMGG (72 aa)) are C-1. Histidine 706 acts as the Charge relay system in catalysis. Residues 721–816 (RAGRIACDFK…SGFVDVLQDD (96 aa)) are PDZ-like. The tract at residues 817–1022 (RYIRYRAWVE…IEMVLADLEK (206 aa)) is C-2. Substrate is bound at residue 877–879 (GGG). Serine 926 acts as the Nucleophile in catalysis. A substrate-binding site is contributed by 954–956 (GIS). Glutamate 984 serves as the catalytic Charge relay system.

This sequence belongs to the peptidase S41B family. Part of the tricorn proteolytic complex.

It localises to the cytoplasm. Tricorn degrades oligopeptides in a sequential manner. This is Tricorn protease (tri) from Thermoplasma volcanium (strain ATCC 51530 / DSM 4299 / JCM 9571 / NBRC 15438 / GSS1).